The chain runs to 145 residues: Deoxyuridine 5'-triphosphate nucleotidohydrolase (145 aa).

Substrate contacts are provided by residues 62–64 (RSG), Asn-75, 79–81 (TVD), and Lys-89.

It belongs to the dUTPase family. The cofactor is Mg(2+).

It catalyses the reaction dUTP + H2O = dUMP + diphosphate + H(+). It functions in the pathway pyrimidine metabolism; dUMP biosynthesis; dUMP from dCTP (dUTP route): step 2/2. Its function is as follows. This enzyme is involved in nucleotide metabolism: it produces dUMP, the immediate precursor of thymidine nucleotides and it decreases the intracellular concentration of dUTP so that uracil cannot be incorporated into DNA. The chain is Deoxyuridine 5'-triphosphate nucleotidohydrolase from Helicobacter pylori (strain P12).